The chain runs to 316 residues: MKRHTRKIAIIGTGLVGSSCAYSIVNQGICEELLLIDINHERAVGEAMDLSHCINFTNTRTKVYAGSYEDCKDMDIVIITAGPAPKPGQSRLDTLGASAKIMESVVGGVMASGFDGIFLLASNPVDIITYQVWKLSGLPRNRVIGTGTSLDSSRLRTILSEMLHVDPRSIHGYSLGEHGDSQMVAWSHVTVGGKPILQILEEQKERFGEIDLDEIVEKTAKAGWEIYKRKGTTYYGIGNSLAYIASSIFNDDHRVIAVSAILDGEYGEYDICTGVPAIITRDGIREVVELNLTEDEESRFAKSNDILRDYMKTIGY.

Val-16, Asp-37, Arg-42, and Tyr-68 together coordinate NAD(+). Arg-91 lines the substrate pocket. NAD(+)-binding positions include Ser-104, 121–123, and Thr-146; that span reads ASN. Substrate is bound at residue 123-126; the sequence is NPVD. 151 to 154 is a substrate binding site; sequence DSSR. Residues Arg-156 and His-171 each contribute to the beta-D-fructose 1,6-bisphosphate site. The active-site Proton acceptor is His-178. Thr-233 is a substrate binding site.

It belongs to the LDH/MDH superfamily. LDH family. In terms of assembly, homotetramer.

The protein resides in the cytoplasm. It carries out the reaction (S)-lactate + NAD(+) = pyruvate + NADH + H(+). It functions in the pathway fermentation; pyruvate fermentation to lactate; (S)-lactate from pyruvate: step 1/1. With respect to regulation, allosterically activated by fructose 1,6-bisphosphate (FBP). Its function is as follows. Catalyzes the conversion of lactate to pyruvate. The sequence is that of L-lactate dehydrogenase 3 from Bacillus cereus (strain ATCC 14579 / DSM 31 / CCUG 7414 / JCM 2152 / NBRC 15305 / NCIMB 9373 / NCTC 2599 / NRRL B-3711).